Here is a 630-residue protein sequence, read N- to C-terminus: DELLA protein DWARF8 (630 aa).

A disordered region spans residues Met1–Glu35. The DELLA motif signature appears at Asp38–Ala42. The segment at Pro161–Ala222 is disordered. 2 stretches are compositionally biased toward low complexity: residues Pro165 to Asp176 and Thr191 to Ala222. The 390-residue stretch at Val234–Arg623 folds into the GRAS domain. The leucine repeat I (LRI) stretch occupies residues Ile241 to Arg297. Positions Leu248–Glu252 match the LxCxE motif motif. The VHIID stretch occupies residues His316–Gly381. The short motif at Val347 to Asp351 is the VHIID element. Residues Gln395–Phe427 form a leucine repeat II (LRII) region. Positions Ile443 to Asn544 are PFYRE. The LXXLL motif signature appears at Leu451 to Leu455. The segment at Ala547–Arg623 is SAW.

This sequence belongs to the GRAS family. DELLA subfamily. Phosphorylated. Post-translationally, ubiquitinated. Upon GA application it is ubiquitinated, leading to its subsequent degradation.

It localises to the nucleus. Functionally, probable transcriptional regulator that acts as a repressor of the gibberellin (GA) signaling pathway. Probably acts by participating in large multiprotein complexes that repress transcription of GA-inducible genes. Upon GA application, it is degraded by the proteasome, allowing the GA signaling pathway. The sequence is that of DELLA protein DWARF8 (D8) from Zea mays (Maize).